The primary structure comprises 270 residues: Tryptophan synthase alpha chain (270 aa).

Catalysis depends on proton acceptor residues Glu-49 and Asp-60.

The protein belongs to the TrpA family. In terms of assembly, tetramer of two alpha and two beta chains.

It carries out the reaction (1S,2R)-1-C-(indol-3-yl)glycerol 3-phosphate + L-serine = D-glyceraldehyde 3-phosphate + L-tryptophan + H2O. The protein operates within amino-acid biosynthesis; L-tryptophan biosynthesis; L-tryptophan from chorismate: step 5/5. In terms of biological role, the alpha subunit is responsible for the aldol cleavage of indoleglycerol phosphate to indole and glyceraldehyde 3-phosphate. This chain is Tryptophan synthase alpha chain, found in Gluconobacter oxydans (strain 621H) (Gluconobacter suboxydans).